Here is a 193-residue protein sequence, read N- to C-terminus: Large ribosomal subunit protein bL17m (193 aa).

Belongs to the bacterial ribosomal protein bL17 family. In terms of assembly, component of the mitochondrial large ribosomal subunit (mt-LSU). Mature N.crassa 74S mitochondrial ribosomes consist of a small (37S) and a large (54S) subunit. The 37S small subunit contains a 16S ribosomal RNA (16S mt-rRNA) and 32 different proteins. The 54S large subunit contains a 23S rRNA (23S mt-rRNA) and 42 different proteins.

It is found in the mitochondrion. Component of the mitochondrial ribosome (mitoribosome), a dedicated translation machinery responsible for the synthesis of mitochondrial genome-encoded proteins, including at least some of the essential transmembrane subunits of the mitochondrial respiratory chain. The mitoribosomes are attached to the mitochondrial inner membrane and translation products are cotranslationally integrated into the membrane. This Neurospora crassa (strain ATCC 24698 / 74-OR23-1A / CBS 708.71 / DSM 1257 / FGSC 987) protein is Large ribosomal subunit protein bL17m (mrpl8).